The following is a 94-amino-acid chain: Co-chaperonin GroES (94 aa).

The protein belongs to the GroES chaperonin family. In terms of assembly, heptamer of 7 subunits arranged in a ring. Interacts with the chaperonin GroEL.

It is found in the cytoplasm. Functionally, together with the chaperonin GroEL, plays an essential role in assisting protein folding. The GroEL-GroES system forms a nano-cage that allows encapsulation of the non-native substrate proteins and provides a physical environment optimized to promote and accelerate protein folding. GroES binds to the apical surface of the GroEL ring, thereby capping the opening of the GroEL channel. The polypeptide is Co-chaperonin GroES (Lactococcus lactis subsp. cremoris (strain SK11)).